The chain runs to 359 residues: MPIKVGINGFGRIGRMVFQALCEDGLLGTEIDVVAVVDMNTDAEYFAYQMRYDTVHGKFKYEVTTTKSSPSVAKDDTLVVNGHRILCVKAQRNPADLPWGKLGVEYVIESTGLFTAKAAAEGHLRGGARKVVISAPASGGAKTLVMGVNHHEYNPSEHHVVSNASCTTNCLAPIVHVLVKEGFGVQTGLMTTIHSYTATQKTVDGVSVKDWRGGRAAAVNIIPSTTGAAKAVGMVIPSTQGKLTGMSFRVPTPDVSVVDLTFTAARDTSIQEIDAALKRASKTYMKGILGYTDEELVSADFINDNRSSIYDSKATLQNNLPKERRFFKIVSWYDNEWGYSHRVVDLVRHMASKDRSARL.

Residues 12-13 (RI), aspartate 38, glutamine 91, and serine 134 each bind NAD(+). D-glyceraldehyde 3-phosphate-binding positions include 165-167 (SCT), threonine 197, 226-227 (TG), and arginine 249. Cysteine 166 serves as the catalytic Nucleophile. Asparagine 335 is a binding site for NAD(+). The Microbody targeting signal motif lies at 357-359 (ARL).

It belongs to the glyceraldehyde-3-phosphate dehydrogenase family. As to quaternary structure, homotetramer.

The protein resides in the glycosome. It catalyses the reaction D-glyceraldehyde 3-phosphate + phosphate + NAD(+) = (2R)-3-phospho-glyceroyl phosphate + NADH + H(+). Its pathway is carbohydrate degradation; glycolysis; pyruvate from D-glyceraldehyde 3-phosphate: step 1/5. The protein is Glyceraldehyde-3-phosphate dehydrogenase, glycosomal of Trypanosoma cruzi.